The primary structure comprises 459 residues: Argininosuccinate lyase (459 aa).

It belongs to the lyase 1 family. Argininosuccinate lyase subfamily.

It localises to the cytoplasm. The enzyme catalyses 2-(N(omega)-L-arginino)succinate = fumarate + L-arginine. Its pathway is amino-acid biosynthesis; L-arginine biosynthesis; L-arginine from L-ornithine and carbamoyl phosphate: step 3/3. The chain is Argininosuccinate lyase from Staphylococcus aureus (strain MSSA476).